Consider the following 140-residue polypeptide: Large ribosomal subunit protein uL11 (140 aa).

This sequence belongs to the universal ribosomal protein uL11 family. Part of the ribosomal stalk of the 50S ribosomal subunit. Interacts with L10 and the large rRNA to form the base of the stalk. L10 forms an elongated spine to which L12 dimers bind in a sequential fashion forming a multimeric L10(L12)X complex. In terms of processing, one or more lysine residues are methylated.

Forms part of the ribosomal stalk which helps the ribosome interact with GTP-bound translation factors. The sequence is that of Large ribosomal subunit protein uL11 from Staphylococcus saprophyticus subsp. saprophyticus (strain ATCC 15305 / DSM 20229 / NCIMB 8711 / NCTC 7292 / S-41).